The sequence spans 274 residues: Indole-3-glycerol phosphate synthase (274 aa).

This sequence belongs to the TrpC family.

The enzyme catalyses 1-(2-carboxyphenylamino)-1-deoxy-D-ribulose 5-phosphate + H(+) = (1S,2R)-1-C-(indol-3-yl)glycerol 3-phosphate + CO2 + H2O. The protein operates within amino-acid biosynthesis; L-tryptophan biosynthesis; L-tryptophan from chorismate: step 4/5. This Kineococcus radiotolerans (strain ATCC BAA-149 / DSM 14245 / SRS30216) protein is Indole-3-glycerol phosphate synthase.